A 170-amino-acid chain; its full sequence is Opacity-related protein POPM3 (170 aa).

Belongs to the opacity porin family.

The protein resides in the cell outer membrane. The sequence is that of Opacity-related protein POPM3 (opr) from Neisseria meningitidis serogroup C.